Consider the following 415-residue polypeptide: Arginine biosynthesis bifunctional protein ArgJ (415 aa).

Residues threonine 156, lysine 182, threonine 193, glutamate 279, asparagine 410, and threonine 415 each coordinate substrate. Residue threonine 193 is the Nucleophile of the active site.

It belongs to the ArgJ family. As to quaternary structure, heterotetramer of two alpha and two beta chains.

The protein localises to the cytoplasm. The enzyme catalyses N(2)-acetyl-L-ornithine + L-glutamate = N-acetyl-L-glutamate + L-ornithine. It carries out the reaction L-glutamate + acetyl-CoA = N-acetyl-L-glutamate + CoA + H(+). Its pathway is amino-acid biosynthesis; L-arginine biosynthesis; L-ornithine and N-acetyl-L-glutamate from L-glutamate and N(2)-acetyl-L-ornithine (cyclic): step 1/1. It functions in the pathway amino-acid biosynthesis; L-arginine biosynthesis; N(2)-acetyl-L-ornithine from L-glutamate: step 1/4. In terms of biological role, catalyzes two activities which are involved in the cyclic version of arginine biosynthesis: the synthesis of N-acetylglutamate from glutamate and acetyl-CoA as the acetyl donor, and of ornithine by transacetylation between N(2)-acetylornithine and glutamate. The sequence is that of Arginine biosynthesis bifunctional protein ArgJ from Synechococcus sp. (strain ATCC 27144 / PCC 6301 / SAUG 1402/1) (Anacystis nidulans).